A 243-amino-acid polypeptide reads, in one-letter code: Phosphoribosyl isomerase A (243 aa).

Asp-10 (proton acceptor) is an active-site residue. Residue Asp-129 is the Proton donor of the active site.

It belongs to the HisA/HisF family.

Its subcellular location is the cytoplasm. The enzyme catalyses 1-(5-phospho-beta-D-ribosyl)-5-[(5-phospho-beta-D-ribosylamino)methylideneamino]imidazole-4-carboxamide = 5-[(5-phospho-1-deoxy-D-ribulos-1-ylimino)methylamino]-1-(5-phospho-beta-D-ribosyl)imidazole-4-carboxamide. It catalyses the reaction N-(5-phospho-beta-D-ribosyl)anthranilate = 1-(2-carboxyphenylamino)-1-deoxy-D-ribulose 5-phosphate. It functions in the pathway amino-acid biosynthesis; L-histidine biosynthesis; L-histidine from 5-phospho-alpha-D-ribose 1-diphosphate: step 4/9. Its pathway is amino-acid biosynthesis; L-tryptophan biosynthesis; L-tryptophan from chorismate: step 3/5. Its function is as follows. Involved in both the histidine and tryptophan biosynthetic pathways. The protein is Phosphoribosyl isomerase A of Mycobacteroides abscessus (strain ATCC 19977 / DSM 44196 / CCUG 20993 / CIP 104536 / JCM 13569 / NCTC 13031 / TMC 1543 / L948) (Mycobacterium abscessus).